Here is a 675-residue protein sequence, read N- to C-terminus: Cysteine-rich receptor-like protein kinase 25 (675 aa).

The first 25 residues, 1–25, serve as a signal peptide directing secretion; the sequence is MSSCFKSSVSLFSVFLFMILKTVTS. At 26 to 281 the chain is on the extracellular side; it reads DPTYLYHICP…IPSEKGKGKN (256 aa). Gnk2-homologous domains lie at 28-134 and 140-247; these read TYLY…NQSI and IRPG…LYPF. 10 N-linked (GlcNAc...) asparagine glycosylation sites follow: Asn-36, Asn-43, Asn-77, Asn-106, Asn-131, Asn-151, Asn-161, Asn-188, Asn-249, and Asn-281. The helical transmembrane segment at 282–302 threads the bilayer; it reads LTVIVTAIAVPVSVCVLLLGA. Residues 303-675 lie on the Cytoplasmic side of the membrane; sequence MCWLLARRRN…DSSITIVYPR (373 aa). The 276-residue stretch at 347–622 folds into the Protein kinase domain; it reads FSESNKLGHG…DILVMMNSFT (276 aa). Residues 353–361 and Lys-375 each bind ATP; that span reads LGHGGFGEV. A Phosphotyrosine modification is found at Tyr-420. Residue Asp-472 is the Proton acceptor of the active site. Ser-476 carries the post-translational modification Phosphoserine. Position 512 is a phosphothreonine (Thr-512). A Phosphotyrosine modification is found at Tyr-520. The segment at 638-661 is disordered; it reads MKDSRDPRSGGSASDHSATSKSLP. The segment covering 648-661 has biased composition (polar residues); the sequence is GSASDHSATSKSLP.

It belongs to the protein kinase superfamily. Ser/Thr protein kinase family. CRK subfamily.

The protein resides in the membrane. It carries out the reaction L-seryl-[protein] + ATP = O-phospho-L-seryl-[protein] + ADP + H(+). It catalyses the reaction L-threonyl-[protein] + ATP = O-phospho-L-threonyl-[protein] + ADP + H(+). The polypeptide is Cysteine-rich receptor-like protein kinase 25 (CRK25) (Arabidopsis thaliana (Mouse-ear cress)).